Reading from the N-terminus, the 443-residue chain is C4-dicarboxylate transport protein (443 aa).

Helical transmembrane passes span 10 to 30 (SLYF…HFYP), 46 to 66 (LIKM…IAGM), 78 to 98 (YALL…LIVV), 143 to 163 (IVGA…VIFG), 199 to 219 (PIGA…GSLV), 224 to 244 (LMIC…GGIC), 291 to 311 (VVGL…SIYL), 332 to 352 (ITLL…TGSG), and 354 to 374 (IVLA…LALI).

The protein belongs to the dicarboxylate/amino acid:cation symporter (DAACS) (TC 2.A.23) family.

It localises to the cell inner membrane. Functionally, responsible for the transport of dicarboxylates such as succinate, fumarate, and malate from the periplasm across the membrane. The chain is C4-dicarboxylate transport protein from Pseudomonas fluorescens (strain SBW25).